A 604-amino-acid chain; its full sequence is Baculoviral IAP repeat-containing protein 3 (604 aa).

The BIR 1 repeat unit spans residues 29-96; sequence ELYRMSTYST…RNLYPSCSFI (68 aa). An Omega-N-methylarginine modification is found at Arg130. Ser140 is subject to Phosphoserine. BIR repeat units lie at residues 169–235 and 255–322; these read EEDR…CPFV and LAAR…CEYL. Zn(2+)-binding residues include Cys292, Cys295, His312, and Cys319. Residues 439–529 form the CARD domain; it reads RESDDVSLIR…MLYKRFFVQQ (91 aa). An RING-type zinc finger spans residues 557 to 592; that stretch reads CKVCMDKEVSIVFIPCGHLVVCRDCAPSLRKCPICR.

It belongs to the IAP family. In terms of assembly, interacts with PRSS25; the interaction inhibits apoptotic suppressor activity. The BIR motifs region interacts with TNF receptor associated factors 1 and 2 (TRAF1 and TRAF2) to form a heteromeric complex, which is then recruited to the tumor necrosis factor receptor 2 (TNFR2). Interaction with TRAF2 is required for ubiquitination of IKBKE, degradation of NFKBIA and activation of NF-kappa-B. Interacts with RIP1, RIP2, RIP3, RIP4 and USP19. In terms of processing, auto-ubiquitinated and degraded by the proteasome in apoptotic cells.

Its subcellular location is the cytoplasm. It is found in the nucleus. The catalysed reaction is S-ubiquitinyl-[E2 ubiquitin-conjugating enzyme]-L-cysteine + [acceptor protein]-L-lysine = [E2 ubiquitin-conjugating enzyme]-L-cysteine + N(6)-ubiquitinyl-[acceptor protein]-L-lysine.. With respect to regulation, USP19 regulates the stability of BIRC3/c-IAP2 by preventing its ubiquitination. Its function is as follows. Multi-functional protein which regulates not only caspases and apoptosis, but also modulates inflammatory signaling and immunity, mitogenic kinase signaling and cell proliferation, as well as cell invasion and metastasis. Acts as an E3 ubiquitin-protein ligase regulating NF-kappa-B signaling and regulates both canonical and non-canonical NF-kappa-B signaling by acting in opposite directions: acts as a positive regulator of the canonical pathway and suppresses constitutive activation of non-canonical NF-kappa-B signaling. The target proteins for its E3 ubiquitin-protein ligase activity include: RIPK1, RIPK2, RIPK3, RIPK4, CASP3, CASP7, CASP8, IKBKE, TRAF1, and BCL10. Acts as an important regulator of innate immune signaling via regulation of Toll-like receptors (TLRs), Nodlike receptors (NLRs) and RIG-I like receptors (RLRs), collectively referred to as pattern recognition receptors (PRRs). Protects cells from spontaneous formation of the ripoptosome, a large multi-protein complex that has the capability to kill cancer cells in a caspase-dependent and caspase-independent manner. Suppresses ripoptosome formation by ubiquitinating RIPK1 and CASP8. In Canis lupus familiaris (Dog), this protein is Baculoviral IAP repeat-containing protein 3 (BIRC3).